A 267-amino-acid chain; its full sequence is Type II pantothenate kinase (267 aa).

6–13 contacts ATP; that stretch reads DAGGTLIK. Catalysis depends on E70, which acts as the Proton acceptor. Residues T99, 121–125, Y137, and S225 contribute to the ATP site; that span reads GGMIQ.

It belongs to the type II pantothenate kinase family. Homodimer.

Its subcellular location is the cytoplasm. It catalyses the reaction (R)-pantothenate + ATP = (R)-4'-phosphopantothenate + ADP + H(+). It functions in the pathway cofactor biosynthesis; coenzyme A biosynthesis; CoA from (R)-pantothenate: step 1/5. In terms of biological role, catalyzes the phosphorylation of pantothenate (Pan), the first step in CoA biosynthesis. This chain is Type II pantothenate kinase, found in Staphylococcus aureus (strain bovine RF122 / ET3-1).